Reading from the N-terminus, the 669-residue chain is DNA mismatch repair protein MutL (669 aa).

The tract at residues 356 to 382 (FEQRQNTENNQEKTFSSEESNSKPFME) is disordered. A compositionally biased stretch (polar residues) spans 361-378 (NTENNQEKTFSSEESNSK).

It belongs to the DNA mismatch repair MutL/HexB family.

Its function is as follows. This protein is involved in the repair of mismatches in DNA. It is required for dam-dependent methyl-directed DNA mismatch repair. May act as a 'molecular matchmaker', a protein that promotes the formation of a stable complex between two or more DNA-binding proteins in an ATP-dependent manner without itself being part of a final effector complex. This is DNA mismatch repair protein MutL from Staphylococcus aureus (strain USA300).